The following is a 184-amino-acid chain: Large ribosomal subunit protein uL22A (184 aa).

K46 is covalently cross-linked (Glycyl lysine isopeptide (Lys-Gly) (interchain with G-Cter in ubiquitin)). The residue at position 70 (T70) is a Phosphothreonine.

The protein belongs to the universal ribosomal protein uL22 family. In terms of assembly, component of the large ribosomal subunit (LSU). Mature yeast ribosomes consist of a small (40S) and a large (60S) subunit. The 40S small subunit contains 1 molecule of ribosomal RNA (18S rRNA) and 33 different proteins (encoded by 57 genes). The large 60S subunit contains 3 rRNA molecules (25S, 5.8S and 5S rRNA) and 46 different proteins (encoded by 81 genes). uL22 is associated with the polypeptide exit tunnel.

The protein localises to the cytoplasm. In terms of biological role, component of the ribosome, a large ribonucleoprotein complex responsible for the synthesis of proteins in the cell. The small ribosomal subunit (SSU) binds messenger RNAs (mRNAs) and translates the encoded message by selecting cognate aminoacyl-transfer RNA (tRNA) molecules. The large subunit (LSU) contains the ribosomal catalytic site termed the peptidyl transferase center (PTC), which catalyzes the formation of peptide bonds, thereby polymerizing the amino acids delivered by tRNAs into a polypeptide chain. The nascent polypeptides leave the ribosome through a tunnel in the LSU and interact with protein factors that function in enzymatic processing, targeting, and the membrane insertion of nascent chains at the exit of the ribosomal tunnel. The sequence is that of Large ribosomal subunit protein uL22A from Saccharomyces cerevisiae (strain ATCC 204508 / S288c) (Baker's yeast).